A 340-amino-acid chain; its full sequence is Meiotic recombination protein DMC1/LIM15 homolog (340 aa).

Position 126-133 (126-133) interacts with ATP; sequence GEFRTGKT. Residue R230 coordinates dsDNA. The ssDNA site is built by R230, F233, R236, R242, and R311. DsDNA contacts are provided by R236 and R242.

This sequence belongs to the RecA family. DMC1 subfamily. As to quaternary structure, double stacked ring-shaped homooctamer. Interacts with BRCA2. Interacts with the MND1-PSMC3IP heterodimer. Interacts with RAD51AP1; the interaction is direct and stimulates DMC1-mediated homologous recombination. Testis.

The protein localises to the nucleus. Its subcellular location is the chromosome. In terms of biological role, participates in meiotic recombination, specifically in homologous strand assimilation, which is required for the resolution of meiotic double-strand breaks. In Mus musculus (Mouse), this protein is Meiotic recombination protein DMC1/LIM15 homolog.